The primary structure comprises 278 residues: Release factor glutamine methyltransferase (278 aa).

S-adenosyl-L-methionine contacts are provided by residues 120 to 124 (GTGTG), aspartate 143, and asparagine 184. 184–187 (NPPY) is a binding site for substrate.

The protein belongs to the protein N5-glutamine methyltransferase family. PrmC subfamily.

It catalyses the reaction L-glutaminyl-[peptide chain release factor] + S-adenosyl-L-methionine = N(5)-methyl-L-glutaminyl-[peptide chain release factor] + S-adenosyl-L-homocysteine + H(+). Methylates the class 1 translation termination release factors RF1/PrfA and RF2/PrfB on the glutamine residue of the universally conserved GGQ motif. This chain is Release factor glutamine methyltransferase, found in Deinococcus radiodurans (strain ATCC 13939 / DSM 20539 / JCM 16871 / CCUG 27074 / LMG 4051 / NBRC 15346 / NCIMB 9279 / VKM B-1422 / R1).